The chain runs to 186 residues: Ribosome maturation factor RimM (186 aa).

Residues Asn-100–Leu-182 form the PRC barrel domain.

This sequence belongs to the RimM family. In terms of assembly, binds ribosomal protein uS19.

It localises to the cytoplasm. In terms of biological role, an accessory protein needed during the final step in the assembly of 30S ribosomal subunit, possibly for assembly of the head region. Essential for efficient processing of 16S rRNA. May be needed both before and after RbfA during the maturation of 16S rRNA. It has affinity for free ribosomal 30S subunits but not for 70S ribosomes. This is Ribosome maturation factor RimM from Rippkaea orientalis (strain PCC 8801 / RF-1) (Cyanothece sp. (strain PCC 8801)).